The sequence spans 228 residues: AA9 family lytic polysaccharide monooxygenase A (228 aa).

Cu(2+) contacts are provided by His1 and His86. The residue at position 1 (His1) is a Methylhistidine. 2 cysteine pairs are disulfide-bonded: Cys56–Cys178 and Cys97–Cys101. Asn138 is a glycosylation site (N-linked (GlcNAc...) asparagine). Positions 164 and 173 each coordinate O2. Tyr175 contacts Cu(2+).

It belongs to the polysaccharide monooxygenase AA9 family. Requires Cu(2+) as cofactor. In terms of processing, the catalytically essential N-terminal histidine His-22 is post-translationally modified by methylation to prevent protonation of the histidine side chain, and protect the critical active site of the enzyme from oxidative damage.

The protein resides in the secreted. The enzyme catalyses [(1-&gt;4)-beta-D-glucosyl]n+m + reduced acceptor + O2 = 4-dehydro-beta-D-glucosyl-[(1-&gt;4)-beta-D-glucosyl]n-1 + [(1-&gt;4)-beta-D-glucosyl]m + acceptor + H2O.. Its activity is regulated as follows. Small amounts of H(2)O(2) boost LPMO activity, while higher amounts lead to inactivation of the enzyme. In terms of biological role, lytic polysaccharide monooxygenase (LPMO) that depolymerizes crystalline and amorphous polysaccharides via the oxidation of scissile alpha- or beta-(1-4)-glycosidic bonds, yielding C1 and C4 oxidation product. Catalysis by LPMOs requires the reduction of the active-site copper from Cu(II) to Cu(I) by a reducing agent and H(2)O(2) or O(2) as a cosubstrate. Is able to cleave cellulose and xylan to produce C1- and C4-oxidized products. The chain is AA9 family lytic polysaccharide monooxygenase A from Thermoascus aurantiacus.